The following is a 268-amino-acid chain: Type III pantothenate kinase (268 aa).

6–13 provides a ligand contact to ATP; sequence DVGNTNIV. Residues Tyr100 and 107 to 110 each bind substrate; that span reads GADR. Asp109 (proton acceptor) is an active-site residue. Position 129 (Asp129) interacts with K(+). Thr132 is a binding site for ATP. Thr184 contributes to the substrate binding site.

Belongs to the type III pantothenate kinase family. In terms of assembly, homodimer. NH4(+) is required as a cofactor. It depends on K(+) as a cofactor.

Its subcellular location is the cytoplasm. The catalysed reaction is (R)-pantothenate + ATP = (R)-4'-phosphopantothenate + ADP + H(+). The protein operates within cofactor biosynthesis; coenzyme A biosynthesis; CoA from (R)-pantothenate: step 1/5. In terms of biological role, catalyzes the phosphorylation of pantothenate (Pan), the first step in CoA biosynthesis. The chain is Type III pantothenate kinase from Alkaliphilus metalliredigens (strain QYMF).